The sequence spans 378 residues: UPF0754 membrane protein BCQ_0944 (378 aa).

Transmembrane regions (helical) follow at residues Met1–Thr21 and Tyr357–Leu377.

The protein belongs to the UPF0754 family.

It is found in the cell membrane. The polypeptide is UPF0754 membrane protein BCQ_0944 (Bacillus cereus (strain Q1)).